The following is a 401-amino-acid chain: MSDRNIRVEPVVGRAVEEQDVEIVERKGLGHPDSLCDGIAEHVSQALARAYIDRVGKVLHYNTDETQLVAGTAAPAFGGGEVVDPIYLLITGRATKEYEGTKIPAETIALRAAREYINETLPFLEFGTDVVVDVKLGEGSGDLQEVFGEDGKQVPMSNDTSFGVGHAPLTETERIVLEAERALNGDYSDDNPAVGQDIKVMGKREGDDIDVTVAVAMVDRYVDDLDGYEAAVAGVREFVADLATDYTDRNVSVHVNTADDYDEGAIYLTTTGTSAEQGDDGSVGRGNRSNGLITPNRSMSMEATSGKNPVNHIGKIYNLLSTEIARTVVDEVDGIREIRIRLLSQIGQPIDKPHVADANLVTEDGIEIADIEDEVEAIIDAELENVTSITERVIDGELTTF.

137–142 (GEGSGD) serves as a coordination point for ATP. Residues 272–305 (GTSAEQGDDGSVGRGNRSNGLITPNRSMSMEATS) are disordered. Residues 287-305 (NRSNGLITPNRSMSMEATS) are compositionally biased toward polar residues.

Belongs to the AdoMet synthase 2 family. Mg(2+) serves as cofactor.

The catalysed reaction is L-methionine + ATP + H2O = S-adenosyl-L-methionine + phosphate + diphosphate. Its pathway is amino-acid biosynthesis; S-adenosyl-L-methionine biosynthesis; S-adenosyl-L-methionine from L-methionine: step 1/1. Its function is as follows. Catalyzes the formation of S-adenosylmethionine from methionine and ATP. This is S-adenosylmethionine synthase from Natronomonas pharaonis (strain ATCC 35678 / DSM 2160 / CIP 103997 / JCM 8858 / NBRC 14720 / NCIMB 2260 / Gabara) (Halobacterium pharaonis).